Here is a 345-residue protein sequence, read N- to C-terminus: Probable dual-specificity RNA methyltransferase RlmN (345 aa).

The active-site Proton acceptor is the Glu-93. Positions 99 to 326 (DDERATLCIS…TTIRASRGED (228 aa)) constitute a Radical SAM core domain. A disulfide bond links Cys-106 and Cys-331. The [4Fe-4S] cluster site is built by Cys-113, Cys-117, and Cys-120. S-adenosyl-L-methionine contacts are provided by residues 158–159 (GE), Ser-190, 212–214 (SLH), and His-288. The active-site S-methylcysteine intermediate is the Cys-331.

Belongs to the radical SAM superfamily. RlmN family. It depends on [4Fe-4S] cluster as a cofactor.

The protein resides in the cytoplasm. The catalysed reaction is adenosine(2503) in 23S rRNA + 2 reduced [2Fe-2S]-[ferredoxin] + 2 S-adenosyl-L-methionine = 2-methyladenosine(2503) in 23S rRNA + 5'-deoxyadenosine + L-methionine + 2 oxidized [2Fe-2S]-[ferredoxin] + S-adenosyl-L-homocysteine. The enzyme catalyses adenosine(37) in tRNA + 2 reduced [2Fe-2S]-[ferredoxin] + 2 S-adenosyl-L-methionine = 2-methyladenosine(37) in tRNA + 5'-deoxyadenosine + L-methionine + 2 oxidized [2Fe-2S]-[ferredoxin] + S-adenosyl-L-homocysteine. Its function is as follows. Specifically methylates position 2 of adenine 2503 in 23S rRNA and position 2 of adenine 37 in tRNAs. This chain is Probable dual-specificity RNA methyltransferase RlmN, found in Bacteroides thetaiotaomicron (strain ATCC 29148 / DSM 2079 / JCM 5827 / CCUG 10774 / NCTC 10582 / VPI-5482 / E50).